Reading from the N-terminus, the 136-residue chain is Histone H2A (136 aa).

Gly residues predominate over residues 1-11; it reads MSSGGKSGGKA. The interval 1–24 is disordered; that stretch reads MSSGGKSGGKAGDASSKAQSRSAK. K6 and K10 each carry N6-acetyllysine. Positions 12–24 are enriched in low complexity; it reads GDASSKAQSRSAK. Q108 bears the N5-methylglutamine mark. A Phosphoserine modification is found at S133. Positions 133–134 match the [ST]-Q motif motif; it reads SQ.

This sequence belongs to the histone H2A family. In terms of assembly, the nucleosome is a histone octamer containing two molecules each of H2A, H2B, H3 and H4 assembled in one H3-H4 heterotetramer and two H2A-H2B heterodimers. The octamer wraps approximately 147 bp of DNA. Post-translationally, phosphorylated to form H2AS128ph (gamma-H2A) in response to DNA double-strand breaks (DSBs) generated by exogenous genotoxic agents and by stalled replication forks. Phosphorylation is dependent on the DNA damage checkpoint kinases MEC1/ATR and TEL1/ATM, spreads on either side of a detected DSB site and may mark the surrounding chromatin for recruitment of proteins required for DNA damage signaling and repair. Gamma-H2A is removed from the DNA prior to the strand invasion-primer extension step of the repair process and subsequently dephosphorylated. Dephosphorylation is necessary for efficient recovery from the DNA damage checkpoint. In terms of processing, acetylated by ESA1 to form H2AK4ac and H2AK7ac.

It is found in the nucleus. It localises to the chromosome. Its function is as follows. Core component of nucleosome which plays a central role in DNA double strand break (DSB) repair. Nucleosomes wrap and compact DNA into chromatin, limiting DNA accessibility to the cellular machineries which require DNA as a template. Histones thereby play a central role in transcription regulation, DNA repair, DNA replication and chromosomal stability. DNA accessibility is regulated via a complex set of post-translational modifications of histones, also called histone code, and nucleosome remodeling. In Mycosarcoma maydis (Corn smut fungus), this protein is Histone H2A (HTA1).